We begin with the raw amino-acid sequence, 274 residues long: Rhamnulose-1-phosphate aldolase (274 aa).

Glu117 is a catalytic residue. The Zn(2+) site is built by His141, His143, and His212.

This sequence belongs to the aldolase class II family. RhaD subfamily. In terms of assembly, homotetramer. Requires Zn(2+) as cofactor.

Its subcellular location is the cytoplasm. It catalyses the reaction L-rhamnulose 1-phosphate = (S)-lactaldehyde + dihydroxyacetone phosphate. Its pathway is carbohydrate degradation; L-rhamnose degradation; glycerone phosphate from L-rhamnose: step 3/3. In terms of biological role, catalyzes the reversible cleavage of L-rhamnulose-1-phosphate to dihydroxyacetone phosphate (DHAP) and L-lactaldehyde. This Shigella dysenteriae serotype 1 (strain Sd197) protein is Rhamnulose-1-phosphate aldolase.